We begin with the raw amino-acid sequence, 59 residues long: Large ribosomal subunit protein uL30 (59 aa).

This sequence belongs to the universal ribosomal protein uL30 family. In terms of assembly, part of the 50S ribosomal subunit.

The chain is Large ribosomal subunit protein uL30 from Sodalis glossinidius (strain morsitans).